A 167-amino-acid polypeptide reads, in one-letter code: Phosphopantetheine adenylyltransferase (167 aa).

Thr-9 is a binding site for substrate. Residues 9–10 and His-17 each bind ATP; that span reads TF. Lys-41, Leu-73, and Arg-87 together coordinate substrate. ATP is bound by residues 88–90, Glu-98, and 123–129; these read GLR and NSYISST.

This sequence belongs to the bacterial CoaD family. Homohexamer. Mg(2+) serves as cofactor.

It localises to the cytoplasm. The catalysed reaction is (R)-4'-phosphopantetheine + ATP + H(+) = 3'-dephospho-CoA + diphosphate. The protein operates within cofactor biosynthesis; coenzyme A biosynthesis; CoA from (R)-pantothenate: step 4/5. Its function is as follows. Reversibly transfers an adenylyl group from ATP to 4'-phosphopantetheine, yielding dephospho-CoA (dPCoA) and pyrophosphate. The chain is Phosphopantetheine adenylyltransferase from Chromohalobacter salexigens (strain ATCC BAA-138 / DSM 3043 / CIP 106854 / NCIMB 13768 / 1H11).